A 187-amino-acid polypeptide reads, in one-letter code: UPF0301 protein PMI0339 (187 aa).

The protein belongs to the UPF0301 (AlgH) family.

This chain is UPF0301 protein PMI0339, found in Proteus mirabilis (strain HI4320).